Consider the following 298-residue polypeptide: Phosphatidylserine decarboxylase proenzyme (298 aa).

Active-site charge relay system; for autoendoproteolytic cleavage activity residues include D113, H169, and S256. S256 functions as the Schiff-base intermediate with substrate; via pyruvic acid; for decarboxylase activity in the catalytic mechanism. S256 bears the Pyruvic acid (Ser); by autocatalysis mark.

It belongs to the phosphatidylserine decarboxylase family. PSD-B subfamily. Prokaryotic type II sub-subfamily. In terms of assembly, heterodimer of a large membrane-associated beta subunit and a small pyruvoyl-containing alpha subunit. It depends on pyruvate as a cofactor. Is synthesized initially as an inactive proenzyme. Formation of the active enzyme involves a self-maturation process in which the active site pyruvoyl group is generated from an internal serine residue via an autocatalytic post-translational modification. Two non-identical subunits are generated from the proenzyme in this reaction, and the pyruvate is formed at the N-terminus of the alpha chain, which is derived from the carboxyl end of the proenzyme. The autoendoproteolytic cleavage occurs by a canonical serine protease mechanism, in which the side chain hydroxyl group of the serine supplies its oxygen atom to form the C-terminus of the beta chain, while the remainder of the serine residue undergoes an oxidative deamination to produce ammonia and the pyruvoyl prosthetic group on the alpha chain. During this reaction, the Ser that is part of the protease active site of the proenzyme becomes the pyruvoyl prosthetic group, which constitutes an essential element of the active site of the mature decarboxylase.

Its subcellular location is the cell membrane. The enzyme catalyses a 1,2-diacyl-sn-glycero-3-phospho-L-serine + H(+) = a 1,2-diacyl-sn-glycero-3-phosphoethanolamine + CO2. It functions in the pathway phospholipid metabolism; phosphatidylethanolamine biosynthesis; phosphatidylethanolamine from CDP-diacylglycerol: step 2/2. Catalyzes the formation of phosphatidylethanolamine (PtdEtn) from phosphatidylserine (PtdSer). The polypeptide is Phosphatidylserine decarboxylase proenzyme (Desulfitobacterium hafniense (strain Y51)).